Consider the following 91-residue polypeptide: uncharacterized protein (91 aa).

The protein belongs to the UPF0440 family.

This is an uncharacterized protein from Methanothermobacter thermautotrophicus (strain ATCC 29096 / DSM 1053 / JCM 10044 / NBRC 100330 / Delta H) (Methanobacterium thermoautotrophicum).